The sequence spans 599 residues: Calcium-dependent protein kinase 10 (599 aa).

Glycine 2 carries N-myristoyl glycine lipidation. The segment at 27 to 110 (RQDGDDALPG…PRPRVPPVKR (84 aa)) is disordered. A compositionally biased stretch (polar residues) spans 74 to 84 (VSTTDTASAEQ). The span at 87–98 (SKSSAGSDSGEA) shows a compositional bias: low complexity. Positions 133-391 (YSLGRKLGQG…AHEVLRHPWV (259 aa)) constitute a Protein kinase domain. Residues 139 to 147 (LGQGQFGTT) and lysine 162 each bind ATP. Aspartate 257 serves as the catalytic Proton acceptor. Residues 397–427 (APDKPLDSAVLSRMKQFSAMNKLKKMALRVI) are autoinhibitory domain. 4 consecutive EF-hand domains span residues 434 to 469 (DEIA…VGAN), 470 to 505 (LQES…MNKI), 506 to 541 (ERED…FGLG), and 544 to 575 (QLEE…PTMG). Residues aspartate 447, aspartate 449, serine 451, glutamine 453, glutamate 458, aspartate 483, aspartate 485, serine 487, threonine 489, glutamate 494, aspartate 519, aspartate 521, serine 523, tyrosine 525, glutamate 530, aspartate 553, aspartate 555, aspartate 557, arginine 559, and glutamate 564 each contribute to the Ca(2+) site.

It belongs to the protein kinase superfamily. Ser/Thr protein kinase family. CDPK subfamily. Expressed in roots.

The protein localises to the membrane. It catalyses the reaction L-seryl-[protein] + ATP = O-phospho-L-seryl-[protein] + ADP + H(+). It carries out the reaction L-threonyl-[protein] + ATP = O-phospho-L-threonyl-[protein] + ADP + H(+). Its activity is regulated as follows. Activated by calcium. Autophosphorylation may play an important role in the regulation of the kinase activity. Functionally, may play a role in signal transduction pathways that involve calcium as a second messenger. This chain is Calcium-dependent protein kinase 10, found in Oryza sativa subsp. japonica (Rice).